A 148-amino-acid polypeptide reads, in one-letter code: Large ribosomal subunit protein uL13 (148 aa).

It belongs to the universal ribosomal protein uL13 family. In terms of assembly, part of the 50S ribosomal subunit.

This protein is one of the early assembly proteins of the 50S ribosomal subunit, although it is not seen to bind rRNA by itself. It is important during the early stages of 50S assembly. The polypeptide is Large ribosomal subunit protein uL13 (Sulfolobus acidocaldarius (strain ATCC 33909 / DSM 639 / JCM 8929 / NBRC 15157 / NCIMB 11770)).